A 110-amino-acid polypeptide reads, in one-letter code: DNA-directed RNA polymerase subunit omega (110 aa).

The protein belongs to the RNA polymerase subunit omega family. The RNAP catalytic core consists of 2 alpha, 1 beta, 1 beta' and 1 omega subunit. When a sigma factor is associated with the core the holoenzyme is formed, which can initiate transcription.

It carries out the reaction RNA(n) + a ribonucleoside 5'-triphosphate = RNA(n+1) + diphosphate. In terms of biological role, promotes RNA polymerase assembly. Latches the N- and C-terminal regions of the beta' subunit thereby facilitating its interaction with the beta and alpha subunits. This is DNA-directed RNA polymerase subunit omega from Mycobacterium leprae (strain Br4923).